We begin with the raw amino-acid sequence, 251 residues long: MSDIGDWFRSIPAITRYWFAATVAVPLIGKLGIISPAYFFLWPEAFLYRFQIWRPFTATFYFPVGPGTGFLYLVNLYFLYQYSTRLEAGAFDGRPADYLFMLLFNWICIVITGLAMDMQLLMIPLIMSVLYVWAQLNRDLIVSFWFGTRFKACYLPWVILGFNYIIGGSVINELIGNLVGHLYFFLMFRYPMDLGGRNFLSTPQFLYRWLPSRRGGVSGFGVPPASMRRAADQNGGGGRHNWGQGFRLGDQ.

Position 2 is an N-acetylserine (S2). The Cytoplasmic segment spans residues 2–15 (SDIGDWFRSIPAIT). The chain crosses the membrane as a helical span at residues 16-31 (RYWFAATVAVPLIGKL). Topologically, residues 32 to 69 (GIISPAYFFLWPEAFLYRFQIWRPFTATFYFPVGPGTG) are lumenal. A helical transmembrane segment spans residues 70–89 (FLYLVNLYFLYQYSTRLEAG). The Cytoplasmic segment spans residues 90 to 94 (AFDGR). A helical transmembrane segment spans residues 95–115 (PADYLFMLLFNWICIVITGLA). Over 116 to 122 (MDMQLLM) the chain is Lumenal. A helical membrane pass occupies residues 123 to 137 (IPLIMSVLYVWAQLN). Topologically, residues 138-154 (RDLIVSFWFGTRFKACY) are cytoplasmic. The chain crosses the membrane as a helical span at residues 155–166 (LPWVILGFNYII). Residues 167–170 (GGSV) lie on the Lumenal side of the membrane. A helical transmembrane segment spans residues 171 to 189 (INELIGNLVGHLYFFLMFR). Residues 190-251 (YPMDLGGRNF…WGQGFRLGDQ (62 aa)) lie on the Cytoplasmic side of the membrane. Position 201 is a phosphoserine (S201). Phosphothreonine is present on T202. S226 carries the post-translational modification Phosphoserine. Residues 229–251 (RAADQNGGGGRHNWGQGFRLGDQ) form a disordered region. Residues 241-248 (NWGQGFRL) carry the SHP-box motif.

This sequence belongs to the derlin family. As to quaternary structure, homotetramer. The four subunits of the tetramer are arranged in a twofold symmetry. Forms homo- and heterooligomers with DERL2 and DERL3; binding to DERL3 is poorer than that between DERL2 and DERL3. Interacts (via SHP-box motif) with VCP. Interacts with AMFR, SELENOS, SEL1L, SELENOK and SYVN1, as well as with SEL1L-SYVN1 and VCP-SELENOS protein complexes; this interaction is weaker than that observed between DERL2 and these complexes. Interacts with NGLY1 and YOD1. Does not bind to EDEM1. Interacts with DNAJB9. Interacts with RNF103. Interacts with HM13. Interacts with XBP1 isoform 1 (via luminal/ectodomain domain); the interaction obviates the need for ectodomain shedding prior HM13/SPP-mediated XBP1 isoform 1 cleavage. Interacts with the signal recognition particle/SRP and the SRP receptor; in the process of endoplasmic reticulum stress-induced pre-emptive quality control. May interact with UBXN6. Interacts with ZFAND2B; probably through VCP. Interacts with CCDC47. Interacts with C18orf32. May interact with TRAM1. Forms a complex with SVIP and VCP/p97. As to expression, widely expressed, with lowest levels in brain and heart.

It is found in the endoplasmic reticulum membrane. Its function is as follows. Functional component of endoplasmic reticulum-associated degradation (ERAD) for misfolded lumenal proteins. Forms homotetramers which encircle a large channel traversing the endoplasmic reticulum (ER) membrane. This allows the retrotranslocation of misfolded proteins from the ER into the cytosol where they are ubiquitinated and degraded by the proteasome. The channel has a lateral gate within the membrane which provides direct access to membrane proteins with no need to reenter the ER lumen first. May mediate the interaction between VCP and the misfolded protein. Also involved in endoplasmic reticulum stress-induced pre-emptive quality control, a mechanism that selectively attenuates the translocation of newly synthesized proteins into the endoplasmic reticulum and reroutes them to the cytosol for proteasomal degradation. By controlling the steady-state expression of the IGF1R receptor, indirectly regulates the insulin-like growth factor receptor signaling pathway. The polypeptide is Derlin-1 (Mus musculus (Mouse)).